We begin with the raw amino-acid sequence, 305 residues long: Imidazoleglycerol-phosphate dehydratase (305 aa).

It belongs to the imidazoleglycerol-phosphate dehydratase family.

It localises to the cytoplasm. The catalysed reaction is D-erythro-1-(imidazol-4-yl)glycerol 3-phosphate = 3-(imidazol-4-yl)-2-oxopropyl phosphate + H2O. Its pathway is amino-acid biosynthesis; L-histidine biosynthesis; L-histidine from 5-phospho-alpha-D-ribose 1-diphosphate: step 6/9. In Neisseria meningitidis serogroup C (strain 053442), this protein is Imidazoleglycerol-phosphate dehydratase.